The following is a 347-amino-acid chain: Quinolinate synthase (347 aa).

Residues histidine 47 and serine 68 each contribute to the iminosuccinate site. Cysteine 113 contributes to the [4Fe-4S] cluster binding site. Iminosuccinate contacts are provided by residues tyrosine 139–asparagine 141 and serine 156. Residue cysteine 200 coordinates [4Fe-4S] cluster. Residues histidine 226–glutamate 228 and threonine 243 each bind iminosuccinate. Cysteine 297 contributes to the [4Fe-4S] cluster binding site.

This sequence belongs to the quinolinate synthase family. Type 1 subfamily. Requires [4Fe-4S] cluster as cofactor.

Its subcellular location is the cytoplasm. The enzyme catalyses iminosuccinate + dihydroxyacetone phosphate = quinolinate + phosphate + 2 H2O + H(+). Its pathway is cofactor biosynthesis; NAD(+) biosynthesis; quinolinate from iminoaspartate: step 1/1. Catalyzes the condensation of iminoaspartate with dihydroxyacetone phosphate to form quinolinate. The polypeptide is Quinolinate synthase (Shigella flexneri serotype 5b (strain 8401)).